Reading from the N-terminus, the 509-residue chain is DEAD-box ATP-dependent RNA helicase CshA (509 aa).

Positions 2-30 match the Q motif motif; sequence QNFKELGISDKTVQTLEAMGFKEPTPIQK. Residues 33–203 enclose the Helicase ATP-binding domain; that stretch reads IPYALEGDDI…QQFMKAPKII (171 aa). 46-53 provides a ligand contact to ATP; the sequence is AQTGTGKT. Residues 150–153 carry the DEAD box motif; the sequence is DEAD. Residues 214–375 enclose the Helicase C-terminal domain; it reads QIDEYYTIVK…LRPPHRKEVL (162 aa). Basic residues-rich tracts occupy residues 440-459 and 467-482; these read ARKN…KRGN and RRSK…KKNQ. The tract at residues 440–509 is disordered; it reads ARKNRSSKGG…KGRTFADHQK (70 aa). Residues 483 to 492 are compositionally biased toward basic and acidic residues; sequence KKFDRRDKQQ.

This sequence belongs to the DEAD box helicase family. CshA subfamily. In terms of assembly, oligomerizes, may be a member of the RNA degradosome.

The protein localises to the cytoplasm. It carries out the reaction ATP + H2O = ADP + phosphate + H(+). Its function is as follows. DEAD-box RNA helicase possibly involved in RNA degradation. Unwinds dsRNA in both 5'- and 3'-directions, has RNA-dependent ATPase activity. The polypeptide is DEAD-box ATP-dependent RNA helicase CshA (Staphylococcus epidermidis (strain ATCC 35984 / DSM 28319 / BCRC 17069 / CCUG 31568 / BM 3577 / RP62A)).